Here is a 491-residue protein sequence, read N- to C-terminus: Homeobox protein unplugged (491 aa).

Disordered regions lie at residues 1–23, 46–69, 124–146, and 227–329; these read MERP…TKTT, SASA…QEQE, AGKE…PLPH, and FSPA…RRTA. The span at 254–264 shows a compositional bias: polar residues; sequence GDSSSDISLTL. The span at 305–316 shows a compositional bias: gly residues; that stretch reads GLGGKDSQGNGS. Positions 323–382 form a DNA-binding region, homeobox; the sequence is SRRRRTAFTSEQLLELEREFHAKKYLSLTERSQIATSLKLSEVQVKIWFQNRRAKWKRVK.

The protein resides in the nucleus. Its function is as follows. Plays a regulatory role in neural branching of the tracheae: segment-specific aspects of these neural branching patterns appear to be generated by homeotic regulation of expression. The chain is Homeobox protein unplugged from Drosophila pseudoobscura pseudoobscura (Fruit fly).